Reading from the N-terminus, the 390-residue chain is Succinate--CoA ligase [ADP-forming] subunit beta (390 aa).

In terms of domain architecture, ATP-grasp spans lysine 9–lysine 244. ATP is bound by residues lysine 46, glutamate 99, leucine 102, and glutamate 107. Mg(2+) contacts are provided by asparagine 199 and aspartate 213. Residues asparagine 264 and glycine 321 to valine 323 each bind substrate.

This sequence belongs to the succinate/malate CoA ligase beta subunit family. Heterotetramer of two alpha and two beta subunits. The cofactor is Mg(2+).

The catalysed reaction is succinate + ATP + CoA = succinyl-CoA + ADP + phosphate. The enzyme catalyses GTP + succinate + CoA = succinyl-CoA + GDP + phosphate. The protein operates within carbohydrate metabolism; tricarboxylic acid cycle; succinate from succinyl-CoA (ligase route): step 1/1. Functionally, succinyl-CoA synthetase functions in the citric acid cycle (TCA), coupling the hydrolysis of succinyl-CoA to the synthesis of either ATP or GTP and thus represents the only step of substrate-level phosphorylation in the TCA. The beta subunit provides nucleotide specificity of the enzyme and binds the substrate succinate, while the binding sites for coenzyme A and phosphate are found in the alpha subunit. The polypeptide is Succinate--CoA ligase [ADP-forming] subunit beta (Hydrogenovibrio crunogenus (strain DSM 25203 / XCL-2) (Thiomicrospira crunogena)).